Here is a 308-residue protein sequence, read N- to C-terminus: UDP-N-acetylenolpyruvoylglucosamine reductase (308 aa).

In terms of domain architecture, FAD-binding PCMH-type spans 32–197 (QTGGKADYYL…LEAAFTLAPG (166 aa)). Arginine 176 is an active-site residue. Residue serine 226 is the Proton donor of the active site. The active site involves glutamate 296.

This sequence belongs to the MurB family. FAD serves as cofactor.

It localises to the cytoplasm. It carries out the reaction UDP-N-acetyl-alpha-D-muramate + NADP(+) = UDP-N-acetyl-3-O-(1-carboxyvinyl)-alpha-D-glucosamine + NADPH + H(+). It participates in cell wall biogenesis; peptidoglycan biosynthesis. Functionally, cell wall formation. This is UDP-N-acetylenolpyruvoylglucosamine reductase from Staphylococcus saprophyticus subsp. saprophyticus (strain ATCC 15305 / DSM 20229 / NCIMB 8711 / NCTC 7292 / S-41).